The primary structure comprises 443 residues: Thymidine phosphorylase (443 aa).

The protein belongs to the thymidine/pyrimidine-nucleoside phosphorylase family. In terms of assembly, homodimer.

It catalyses the reaction thymidine + phosphate = 2-deoxy-alpha-D-ribose 1-phosphate + thymine. The protein operates within pyrimidine metabolism; dTMP biosynthesis via salvage pathway; dTMP from thymine: step 1/2. Functionally, the enzymes which catalyze the reversible phosphorolysis of pyrimidine nucleosides are involved in the degradation of these compounds and in their utilization as carbon and energy sources, or in the rescue of pyrimidine bases for nucleotide synthesis. The polypeptide is Thymidine phosphorylase (Shewanella loihica (strain ATCC BAA-1088 / PV-4)).